Here is a 318-residue protein sequence, read N- to C-terminus: Annexin D6 (318 aa).

Residue A2 is modified to N-acetylalanine. Annexin repeat units follow at residues 11–82 (PLPE…LWTL), 83–154 (DPTE…PLVS), 168–239 (KLAR…TAIK), and 243–314 (YPEK…ALLG). The Ca(2+) site is built by F24, G26, G28, and E68. Position 95 is a phosphoserine (S95). T100 and T112 each carry phosphothreonine. The residue at position 129 (Y129) is a Phosphotyrosine. Ca(2+)-binding residues include I256, R258, and G260. Phosphotyrosine is present on Y285. S290 is modified (phosphoserine). The Ca(2+) site is built by D300 and T301.

The protein belongs to the annexin (TC 1.A.31.1) family. As to expression, expressed in flowers.

This Arabidopsis thaliana (Mouse-ear cress) protein is Annexin D6 (ANN6).